Here is a 257-residue protein sequence, read N- to C-terminus: DNA repair protein RecO (257 aa).

The protein belongs to the RecO family.

Its function is as follows. Involved in DNA repair and RecF pathway recombination. This chain is DNA repair protein RecO, found in Variovorax paradoxus (strain S110).